The following is a 233-amino-acid chain: Cytidylate kinase (233 aa).

Position 15–23 (15–23 (GPSGAGKST)) interacts with ATP. Positions 183–201 (RRDEQDSGREHAPLRRADD) are enriched in basic and acidic residues. Residues 183 to 202 (RRDEQDSGREHAPLRRADDA) are disordered.

This sequence belongs to the cytidylate kinase family. Type 1 subfamily.

The protein localises to the cytoplasm. The catalysed reaction is CMP + ATP = CDP + ADP. The enzyme catalyses dCMP + ATP = dCDP + ADP. The chain is Cytidylate kinase from Geobacter sulfurreducens (strain ATCC 51573 / DSM 12127 / PCA).